The primary structure comprises 239 residues: MEFFNILQSSCNDVNLDFNDKKYNQFISYKNLIQEWNKKVNLTAIVEDEEIIKKHFIDCIKIFKASPIGEAKSLIDIGTGAGFPGIPIKILREDIKITLLDSLQKRINFLNIVIGDLKLKDIQCLHGRAEDYAQEAEHRQKYDVAVSRAVANLAVLSEFCIPFVKKGGYFIAMKGPSVEEEITVATKSIEVLGGKIEDIIKIDIEDTDLKHNLVIIKKVKETEKKYPRKPGIIKKDPLK.

S-adenosyl-L-methionine contacts are provided by residues Gly78, Phe83, Ala129 to Glu130, and Arg148.

The protein belongs to the methyltransferase superfamily. RNA methyltransferase RsmG family.

It is found in the cytoplasm. Specifically methylates the N7 position of a guanine in 16S rRNA. The polypeptide is Ribosomal RNA small subunit methyltransferase G (Clostridium botulinum (strain Loch Maree / Type A3)).